The chain runs to 134 residues: Ion transport peptide-like (134 aa).

3 disulfides stabilise this stretch: Cys62–Cys98, Cys78–Cys94, and Cys81–Cys107.

Belongs to the arthropod CHH/MIH/GIH/VIH hormone family.

It is found in the secreted. The chain is Ion transport peptide-like from Schistocerca gregaria (Desert locust).